Here is a 253-residue protein sequence, read N- to C-terminus: MRIKFLVVLAVICLLAHYASASGMGGDKKPKDAPKPKDAPKPKEVKPVKADSSEYEIEVIKHQKEKTEKKEKEKKAHVEIKKKIKNKEKKFVPCSEILKDEKLECEKNATPGYKALFEFKESESFCEWECDYEAIPGAKKDEKKEKKVVKVIKPPKEKPPKKPRKECSGEKVIKFQNCLVKIRGLIAFGDKTKNFDKKFAKLVQGKQKKGAKKAKGGKKAEPKPGPKPAPKPGPKPAPKPVPKPADKPKDAKK.

The first 21 residues, 1 to 21, serve as a signal peptide directing secretion; sequence MRIKFLVVLAVICLLAHYASA. Disordered stretches follow at residues 23 to 51, 140 to 168, and 203 to 253; these read GMGG…VKAD, KDEK…KECS, and VQGK…DAKK. Composition is skewed to basic and acidic residues over residues 26–51 and 154–168; these read GDKK…VKAD and PPKE…KECS. Tandem repeats lie at residues 29–34 and 35–40. A 3 X 6 AA approximate tandem repeats of K-P-K-D-A-P region spans residues 29–47; the sequence is KPKDAPKPKDAPKPKEVKP. The stretch at 41–47 is one 1-3; approximate repeat; sequence KPKEVKP. 2 consecutive repeat copies span residues 153 to 156 and 158 to 161. The interval 153-166 is 3 X 4 AA approximate tandem repeats of K-P-P-K; the sequence is KPPKEKPPKKPRKE. The stretch at 162-166 is one 2-3; approximate repeat; the sequence is KPRKE. A compositionally biased stretch (basic residues) spans 206-217; sequence KQKKGAKKAKGG. 6 consecutive repeat copies span residues 222–225, 226–229, 230–233, 234–237, 238–241, and 242–245. A 7 X 4 AA approximate tandem repeats of P-K-P-[GAV] region spans residues 222–249; the sequence is PKPGPKPAPKPGPKPAPKPVPKPADKPK. A compositionally biased stretch (pro residues) spans 225–243; sequence GPKPAPKPGPKPAPKPVPK. Residues 244 to 253 are compositionally biased toward basic and acidic residues; sequence PADKPKDAKK. The 3-7; approximate repeat unit spans residues 246 to 249; sequence DKPK.

Salivary gland.

The protein localises to the secreted. Functionally, used by the larvae to construct a supramolecular structure, the larval tube. This chain is Salivary gland SP38-40.B protein (SP38-40.B), found in Chironomus tentans (Midge).